A 314-amino-acid chain; its full sequence is Methionyl-tRNA formyltransferase (314 aa).

111–114 provides a ligand contact to (6S)-5,6,7,8-tetrahydrofolate; it reads SLLP.

This sequence belongs to the Fmt family.

The catalysed reaction is L-methionyl-tRNA(fMet) + (6R)-10-formyltetrahydrofolate = N-formyl-L-methionyl-tRNA(fMet) + (6S)-5,6,7,8-tetrahydrofolate + H(+). Attaches a formyl group to the free amino group of methionyl-tRNA(fMet). The formyl group appears to play a dual role in the initiator identity of N-formylmethionyl-tRNA by promoting its recognition by IF2 and preventing the misappropriation of this tRNA by the elongation apparatus. The protein is Methionyl-tRNA formyltransferase of Chlorobium luteolum (strain DSM 273 / BCRC 81028 / 2530) (Pelodictyon luteolum).